Here is an 85-residue protein sequence, read N- to C-terminus: Small ribosomal subunit protein bS20 (85 aa).

Residues 1–25 (MANIKSAIKRAKLSEERRAHNASIK) form a disordered region.

It belongs to the bacterial ribosomal protein bS20 family.

Functionally, binds directly to 16S ribosomal RNA. This is Small ribosomal subunit protein bS20 from Bacillus anthracis (strain A0248).